Reading from the N-terminus, the 380-residue chain is Cyclohexane-1-carbonyl-CoA dehydrogenase (380 aa).

The protein belongs to the acyl-CoA dehydrogenase family. In terms of assembly, homotetramer. It depends on FAD as a cofactor.

The catalysed reaction is cyclohexane-1-carbonyl-CoA + oxidized [electron-transfer flavoprotein] + H(+) = cyclohex-1-ene-1-carbonyl-CoA + reduced [electron-transfer flavoprotein]. Functionally, acyl-CoA dehydrogenase involved in the anaerobic degradation of cyclohexane carboxylic acid (CHC). Catalyzes the 1,2-dehydrogenation of cyclohexane-1-carbonyl-CoA (CHCoA) to cyclohex-1-ene-1-carbonyl-CoA (CHeneCoA). An alternative substrate, cyclohex-3-ene-1-carboxyl-CoA can be converted to the corresponding cyclohexadiene-1-carboxyl-CoA isomers (30% rate compared to CHC). The sequence is that of Cyclohexane-1-carbonyl-CoA dehydrogenase from Geobacter metallireducens (strain ATCC 53774 / DSM 7210 / GS-15).